A 187-amino-acid chain; its full sequence is uncharacterized protein (187 aa).

The tract at residues 131–187 (VAEKKDQRKKKPKVKTQGENAPVAKSAGENSGKLEEQKDERKGIAKDIDDFFGGIDG) is disordered. Basic and acidic residues predominate over residues 162–179 (GKLEEQKDERKGIAKDID).

This is an uncharacterized protein from Haemophilus influenzae (Bacteriophage HP1).